A 261-amino-acid polypeptide reads, in one-letter code: Syntaxin-7 (261 aa).

The residue at position 2 (S2) is an N-acetylserine. The Cytoplasmic portion of the chain corresponds to 2–238 (SYTPGVGGDP…DYQRKSRKTL (237 aa)). T4 is subject to Phosphothreonine. S45 carries the post-translational modification Phosphoserine. Positions 47 to 69 (ELRQQLQQKQQYTNQLAKETDKY) form a coiled coil. S75 is modified (phosphoserine). T79 bears the Phosphothreonine mark. A phosphoserine mark is found at S125, S126, S129, and S205. A disordered region spans residues 129–148 (SGSFPEDSSKERNLVSWESQ). The t-SNARE coiled-coil homology domain occupies 165-227 (LRLIHERESS…QQANQQLSRA (63 aa)). Residues 239–259 (CIIILILVIGVAIISLIIWGL) form a helical; Anchor for type IV membrane protein membrane-spanning segment. Topologically, residues 260–261 (NH) are vesicular.

Belongs to the syntaxin family. In terms of assembly, forms a SNARE complex with VTI1B, STX8 and VAMP8 which functions in the homotypic fusion of late endosomes. Component of the SNARE complex composed of STX7, STX8, VAMP7 and VTI1B that is required for heterotypic fusion of late endosomes with lysosomes. Interacts with VPS11, VPS16 and VPS18. Interacts with VPS33A. Interacts with TPC1. In terms of tissue distribution, highest expression is found in placenta followed by heart, skeletal muscle, kidney and brain. Low expression is found in pancreas, lung and liver.

Its subcellular location is the early endosome membrane. May be involved in protein trafficking from the plasma membrane to the early endosome (EE) as well as in homotypic fusion of endocytic organelles. Mediates the endocytic trafficking from early endosomes to late endosomes and lysosomes. The chain is Syntaxin-7 (STX7) from Homo sapiens (Human).